Consider the following 366-residue polypeptide: Phospho-N-acetylmuramoyl-pentapeptide-transferase (366 aa).

Helical transmembrane passes span 3–23 (QIII…PILI), 55–75 (IAII…SYFA), 80–100 (FTAS…TGFA), 118–138 (AKLI…LRFP), 161–181 (IAFG…YVVV), 197–217 (LAAG…FWQF), 238–258 (IAVL…WNAA), 262–282 (IFMG…ISVV), 290–310 (VIIG…IAVF), and 341–361 (FWLI…GDWL).

It belongs to the glycosyltransferase 4 family. MraY subfamily. Requires Mg(2+) as cofactor.

It localises to the cell membrane. The catalysed reaction is UDP-N-acetyl-alpha-D-muramoyl-L-alanyl-gamma-D-glutamyl-meso-2,6-diaminopimeloyl-D-alanyl-D-alanine + di-trans,octa-cis-undecaprenyl phosphate = di-trans,octa-cis-undecaprenyl diphospho-N-acetyl-alpha-D-muramoyl-L-alanyl-D-glutamyl-meso-2,6-diaminopimeloyl-D-alanyl-D-alanine + UMP. It functions in the pathway cell wall biogenesis; peptidoglycan biosynthesis. Its function is as follows. Catalyzes the initial step of the lipid cycle reactions in the biosynthesis of the cell wall peptidoglycan: transfers peptidoglycan precursor phospho-MurNAc-pentapeptide from UDP-MurNAc-pentapeptide onto the lipid carrier undecaprenyl phosphate, yielding undecaprenyl-pyrophosphoryl-MurNAc-pentapeptide, known as lipid I. The chain is Phospho-N-acetylmuramoyl-pentapeptide-transferase from Corynebacterium efficiens (strain DSM 44549 / YS-314 / AJ 12310 / JCM 11189 / NBRC 100395).